The primary structure comprises 42 residues: Fungal defensin eurocin (42 aa).

Residues phenylalanine 2, glycine 3, cysteine 4, and histidine 14 each coordinate beta-D-GlcNAc-(1-&gt;4)-Mur2Ac(oyl-L-Ala-gamma-D-Glu-L-Lys-D-Ala-D-Ala)-di-trans,octa-cis-undecaprenyl diphosphate. 3 disulfides stabilise this stretch: cysteine 4-cysteine 27, cysteine 11-cysteine 38, and cysteine 15-cysteine 40. The interval 31–35 (WYLGH) is interaction site with membranes lipids. Cysteine 38 contributes to the beta-D-GlcNAc-(1-&gt;4)-Mur2Ac(oyl-L-Ala-gamma-D-Glu-L-Lys-D-Ala-D-Ala)-di-trans,octa-cis-undecaprenyl diphosphate binding site.

The protein belongs to the invertebrate defensin family.

The protein localises to the secreted. It localises to the target cell membrane. Functionally, antimicrobial peptide that acts against Gram-positive bacteria but not against Gram-negative bacteria. It selectively inhibits peptidoglycan biosynthesis through complex formation with the cell wall precursor lipid II (1:1 molar ratio) thus inhibiting cell wall synthesis. It does not disrupt cell membranes. In vivo, is effective against an intraperitoneal infection with S.pneumoniae. In vitro, it shows very low hemolytic and cytolytic activities. This chain is Fungal defensin eurocin, found in Aspergillus amstelodami.